The following is a 612-amino-acid chain: Glutamine--fructose-6-phosphate aminotransferase [isomerizing] (612 aa).

Cysteine 2 (nucleophile; for GATase activity) is an active-site residue. Residues 2–217 (CGIVGGVAER…EGDIARLTRD (216 aa)) form the Glutamine amidotransferase type-2 domain. 2 consecutive SIS domains span residues 283 to 428 (AEAD…VKEQ) and 461 to 602 (LSEL…VDQP). Lysine 607 acts as the For Fru-6P isomerization activity in catalysis.

Homodimer.

It localises to the cytoplasm. The catalysed reaction is D-fructose 6-phosphate + L-glutamine = D-glucosamine 6-phosphate + L-glutamate. Its function is as follows. Catalyzes the first step in hexosamine metabolism, converting fructose-6P into glucosamine-6P using glutamine as a nitrogen source. This is Glutamine--fructose-6-phosphate aminotransferase [isomerizing] from Acinetobacter baylyi (strain ATCC 33305 / BD413 / ADP1).